A 345-amino-acid chain; its full sequence is Ubiquitin-associated domain-containing protein 2 (345 aa).

Residues 1 to 39 (MFTSTGSSGLYKAPLSKSLLLVPSALSLLLTLLLPHCQK) form the signal peptide. The Extracellular portion of the chain corresponds to 40 to 91 (FFVYDLHAVKHDLQIWRLICGRIICLDLKDAFCSGLLIYNFRIFERRYGSRK). Residues 92-112 (FASFLLGSWVLSALFDFILVE) form a helical membrane-spanning segment. Topologically, residues 113-125 (AVQYSLGVTVASN) are cytoplasmic. Residues 126 to 146 (LPSGFLAPVFALFVPFHCSIP) traverse the membrane as a helical segment. The Extracellular segment spans residues 147–163 (RVQVAQILGPLSITNKT). Residue Asn161 is glycosylated (N-linked (GlcNAc...) asparagine). The helical transmembrane segment at 164-184 (LIYILGLQLFTSGSYIWIVAM) threads the bilayer. At 185–345 (SGLISGMCYD…NVATNFLLQH (161 aa)) the chain is on the cytoplasmic side. The disordered stretch occupies residues 287–306 (NINYQDGPRSEQRASPPLEV). Residues 305 to 345 (EVSEEQVARLMEMGFSRGDALEALRASNNDLNVATNFLLQH) enclose the UBA domain.

In terms of assembly, interacts with LMBR1L, FAF2, AMFR and VCP.

The protein resides in the endoplasmic reticulum membrane. In terms of biological role, restricts trafficking of FAF2 from the endoplasmic reticulum to lipid droplets. In association with LMBR1L and E3 ubiquitin-protein ligase AMFR, negatively regulates the canonical Wnt signaling pathway in the lymphocytes by promoting the ubiquitin-mediated degradation of CTNNB1 and Wnt receptors FZD6 and LRP6. The protein is Ubiquitin-associated domain-containing protein 2 (Ubac2) of Mus musculus (Mouse).